The chain runs to 483 residues: Keratin, type II cytoskeletal 8 (483 aa).

A compositionally biased stretch (polar residues) spans 1-25; sequence MSVRVTQKSYKMSTSGPRAFSSRSF. The disordered stretch occupies residues 1–43; the sequence is MSVRVTQKSYKMSTSGPRAFSSRSFTSGPGARISSSSFSRVGS. A head region spans residues 1 to 90; that stretch reads MSVRVTQKSY…DPNIQAVRTQ (90 aa). Ser9 carries the post-translational modification Phosphoserine; by PKC/PRKCE. Lys11 is covalently cross-linked (Glycyl lysine isopeptide (Lys-Gly) (interchain with G-Cter in SUMO2)). A phosphoserine mark is found at Ser13, Ser15, Ser21, and Ser22. Residue Arg23 is modified to Omega-N-methylarginine. Phosphoserine; by PKC/PRKCE is present on Ser24. At Ser24 the chain carries Phosphoserine. Phosphothreonine is present on Thr26. Residues 26–43 show a composition bias toward low complexity; it reads TSGPGARISSSSFSRVGS. A Phosphoserine modification is found at Ser27. The residue at position 32 (Arg32) is an Omega-N-methylarginine. Residues Ser34, Ser37, and Ser39 each carry the phosphoserine modification. Omega-N-methylarginine is present on Arg40. Phosphoserine occurs at positions 43, 44, and 47. Arg49 carries the post-translational modification Asymmetric dimethylarginine; alternate. Position 49 is an omega-N-methylarginine; alternate (Arg49). Ser51 bears the Phosphoserine mark. The segment at 91–126 is coil 1A; it reads EKEQIKTLNNKFASFIDKVRFLEQQNKMLETKWSLL. In terms of domain architecture, IF rod spans 91–402; the sequence is EKEQIKTLNN…KLLEGEESRL (312 aa). Position 101 is an N6-malonyllysine (Lys101). Glycyl lysine isopeptide (Lys-Gly) (interchain with G-Cter in SUMO2) cross-links involve residues Lys122 and Lys130. Positions 127–143 are linker 1; it reads QQQKTSRSNMDNMFESY. Residues 144–235 are coil 1B; it reads INNLRRQLEA…QIHEEEIREL (92 aa). Lys197 is covalently cross-linked (Glycyl lysine isopeptide (Lys-Gly) (interchain with G-Cter in SUMO1); alternate). Lys197 participates in a covalent cross-link: Glycyl lysine isopeptide (Lys-Gly) (interchain with G-Cter in SUMO2); alternate. N6-acetyllysine is present on Lys207. The interval 236–259 is linker 12; it reads QSQISDTSVVLSMDNSRSLDMDSI. A phosphoserine mark is found at Ser253, Ser258, and Ser274. The coil 2 stretch occupies residues 260-398; that stretch reads IAEVRAQYEE…ATYRKLLEGE (139 aa). The tract at residues 261 to 382 is necessary for interaction with PNN; the sequence is AEVRAQYEEI…EYQELMNVKL (122 aa). Lys285 is covalently cross-linked (Glycyl lysine isopeptide (Lys-Gly) (interchain with G-Cter in SUMO2)). A Glycyl lysine isopeptide (Lys-Gly) (interchain with G-Cter in SUMO2); alternate cross-link involves residue Lys295. Residue Lys295 is modified to N6-acetyllysine; alternate. Residue Lys304 forms a Glycyl lysine isopeptide (Lys-Gly) (interchain with G-Cter in SUMO2) linkage. A Glycyl lysine isopeptide (Lys-Gly) (interchain with G-Cter in SUMO2); alternate cross-link involves residue Lys325. Lys325 carries the post-translational modification N6-acetyllysine; alternate. Residue Lys393 forms a Glycyl lysine isopeptide (Lys-Gly) (interchain with G-Cter in SUMO2) linkage. The segment at 399–483 is tail; sequence ESRLESGMQN…VSESSDIMSK (85 aa). 7 positions are modified to phosphoserine: Ser400, Ser404, Ser410, Ser417, Ser424, Ser426, and Ser432. A Glycyl lysine isopeptide (Lys-Gly) (interchain with G-Cter in SUMO1); alternate cross-link involves residue Lys472. Lys472 is covalently cross-linked (Glycyl lysine isopeptide (Lys-Gly) (interchain with G-Cter in SUMO2); alternate). Residues Ser475, Ser477, Ser478, and Ser482 each carry the phosphoserine modification.

Belongs to the intermediate filament family. Heterotetramer of two type I and two type II keratins. Forms a heterodimer with KRT18. Associates with KRT20. Interacts with PNN. When associated with KRT19, interacts with DMD. Interacts with TCHP. Interacts with APEX1. Interacts with GPER1. Interacts with EPPK1. Interacts with PKP1 and PKP2. In terms of processing, O-glycosylated. O-GlcNAcylation at multiple sites increases solubility, and decreases stability by inducing proteasomal degradation. O-glycosylated (O-GlcNAcylated), in a cell cycle-dependent manner. Expressed in cardiac and striated muscle. Expressed at Z-lines within the muscle fibers and at Z-line and M-line domains at costameres at the sarcolemmal membrane (at protein level). Observed in coagulating gland, bladder, salivary gland, kidney, spleen, thymus, lung and heart. Also observed in ventral prostate, seminal vesicle and liver where expression increases following castration.

Its subcellular location is the cytoplasm. It localises to the nucleus. The protein resides in the nucleoplasm. The protein localises to the nucleus matrix. Its function is as follows. Together with KRT19, helps to link the contractile apparatus to dystrophin at the costameres of striated muscle. The sequence is that of Keratin, type II cytoskeletal 8 (Krt8) from Rattus norvegicus (Rat).